The following is a 578-amino-acid chain: Arginine--tRNA ligase (578 aa).

The 'HIGH' region signature appears at 127 to 137 (PNLAKEMHVGH).

The protein belongs to the class-I aminoacyl-tRNA synthetase family. As to quaternary structure, monomer.

It localises to the cytoplasm. The enzyme catalyses tRNA(Arg) + L-arginine + ATP = L-arginyl-tRNA(Arg) + AMP + diphosphate. This is Arginine--tRNA ligase from Pseudomonas putida (strain ATCC 700007 / DSM 6899 / JCM 31910 / BCRC 17059 / LMG 24140 / F1).